Consider the following 69-residue polypeptide: Large ribosomal subunit protein uL29 (69 aa).

Belongs to the universal ribosomal protein uL29 family.

The sequence is that of Large ribosomal subunit protein uL29 from Staphylococcus aureus (strain Mu3 / ATCC 700698).